Consider the following 238-residue polypeptide: Orotidine 5'-phosphate decarboxylase (238 aa).

Residues Asp10, Lys32, 59-68, Thr122, Arg184, Gln193, Gly213, and Arg214 contribute to the substrate site; that span reads DLKLHDIPNT. Lys61 (proton donor) is an active-site residue.

This sequence belongs to the OMP decarboxylase family. Type 1 subfamily. In terms of assembly, homodimer.

The enzyme catalyses orotidine 5'-phosphate + H(+) = UMP + CO2. It participates in pyrimidine metabolism; UMP biosynthesis via de novo pathway; UMP from orotate: step 2/2. Its function is as follows. Catalyzes the decarboxylation of orotidine 5'-monophosphate (OMP) to uridine 5'-monophosphate (UMP). The chain is Orotidine 5'-phosphate decarboxylase from Bacillus cereus (strain B4264).